A 697-amino-acid polypeptide reads, in one-letter code: MANKREFPLAKTRNIGIMAHIDAGKTTTTERILYYTGKIHKIGETHEGDSQMDWMDEEKERGITITSAATTAQWKDYRINIIDTPGHVDFTIEVERSLRVLDGAVTVLDAQAGVEPQTENVWRQAETYGVPRIVFVNKMDKIGADFDKSVKSLHERLNANAHAVQMPIGSADTFEGVIDLINMVADIYDEDKLGSKWDTVPIPDQYKEEAEKRRGELIEAVADVDDGIMEKYLGGEEISNDELKAAIRKATLNLEFFPVYAGSAFKNKGVQMMLDGVIDYLPSPLDVKPYVAHDPKTGDEVELMADDKKPFAALAFKIATDPFVGRLTFIRVYTGSLESGSYVLNASKNSRERVGRLLQMHANSRTEIPEVFSGDIAGAIGLKNTTTGDSLTDPDHPLILESLKVPDPVIQVSVEPKSKADRDKMDVALQKLTEEDPTFRAETNPETGQTLISGMGELHLDIMVERMRREFNVDAKIGEPQVAYRETFTKEAEAQGKFVRQSGGKGQYGDVWIDFTPNEEGKGYEFEDAIVGGVVPREFIPSVDQGLQEAMKNGVLAGYPLIDVKAKLYDGSYHEVDSSEAAFKVAASLALKNAASKAGAVILEPIMKVQVTTPEEYLGDVMGSITARRGTMEGMEDRAGAKVINSFVPLSEMFGYATTLRSSTQGRGTFTMVFDHYSPTPKSIQADIIKKRGGEAE.

The region spanning 10–285 is the tr-type G domain; that stretch reads AKTRNIGIMA…GVIDYLPSPL (276 aa). Residues 19-26, 83-87, and 137-140 each bind GTP; these read AHIDAGKT, DTPGH, and NKMD.

Belongs to the TRAFAC class translation factor GTPase superfamily. Classic translation factor GTPase family. EF-G/EF-2 subfamily.

The protein localises to the cytoplasm. Catalyzes the GTP-dependent ribosomal translocation step during translation elongation. During this step, the ribosome changes from the pre-translocational (PRE) to the post-translocational (POST) state as the newly formed A-site-bound peptidyl-tRNA and P-site-bound deacylated tRNA move to the P and E sites, respectively. Catalyzes the coordinated movement of the two tRNA molecules, the mRNA and conformational changes in the ribosome. This Lactobacillus helveticus (strain DPC 4571) protein is Elongation factor G.